Here is a 162-residue protein sequence, read N- to C-terminus: Caveolin-2 (162 aa).

Over Met1 to Lys86 the chain is Cytoplasmic. Tyr19 is modified (phosphotyrosine; by SRC). A phosphoserine mark is found at Ser20 and Ser23. Tyr27 carries the post-translational modification Phosphotyrosine; by SRC. Positions Phe87 to Leu107 form an intramembrane region, helical. Residues Ser108–Asp162 lie on the Cytoplasmic side of the membrane.

Belongs to the caveolin family. Monomer or homodimer. Interacts with CAV1; the interaction forms a stable heterooligomeric complex that is required for targeting to lipid rafts and for caveolae formation. Tyrosine phosphorylated forms do not form heterooligomers with the Tyr-19-phosphorylated form existing as a monomer or dimer, and the Tyr-27-form as a monomer only. Interacts (tyrosine phosphorylated form) with the SH2 domain-containing proteins, RASA1, NCK1 and SRC. Interacts (tyrosine phosphorylated form) with INSR, the interaction (Tyr-27-phosphorylated form) is increased on insulin stimulation. Interacts (Tyr-19 phosphorylated form) with MAPK1 (phosphorylated form); the interaction, promoted by insulin, leads to nuclear location and MAPK1 activation. Interacts with STAT3; the interaction is increased on insulin-induced tyrosine phosphorylation leading to STAT activation. In terms of processing, phosphorylated on serine and tyrosine residues. CAV1 promotes phosphorylation on Ser-23 which then targets the complex to the plasma membrane, lipid rafts and caveolae. Phosphorylation on both Tyr-19 and Tyr-27 is required for insulin-induced 'Ser-727' phosphorylation of STAT3 and its activation. Phosphorylation on Tyr-19 is required for insulin-induced phosphorylation of MAPK1 and DNA binding of STAT3. Tyrosine phosphorylation is induced by both EGF and insulin.

Its subcellular location is the nucleus. The protein localises to the cytoplasm. It is found in the golgi apparatus membrane. The protein resides in the cell membrane. It localises to the membrane. Its subcellular location is the caveola. May act as a scaffolding protein within caveolar membranes. Interacts directly with G-protein alpha subunits and can functionally regulate their activity. Acts as an accessory protein in conjunction with CAV1 in targeting to lipid rafts and driving caveolae formation. Positive regulator of cellular mitogenesis of the MAPK signaling pathway. Required for the insulin-stimulated nuclear translocation and activation of MAPK1 and STAT3, and the subsequent regulation of cell cycle progression. The polypeptide is Caveolin-2 (CAV2) (Rhinolophus ferrumequinum (Greater horseshoe bat)).